A 197-amino-acid chain; its full sequence is Probable molybdenum cofactor guanylyltransferase (197 aa).

GTP-binding positions include 9–11 (LAG), Lys21, Asp65, and Asp94. Asp94 contacts Mg(2+).

Belongs to the MobA family. The cofactor is Mg(2+).

Its subcellular location is the cytoplasm. The enzyme catalyses Mo-molybdopterin + GTP + H(+) = Mo-molybdopterin guanine dinucleotide + diphosphate. In terms of biological role, transfers a GMP moiety from GTP to Mo-molybdopterin (Mo-MPT) cofactor (Moco or molybdenum cofactor) to form Mo-molybdopterin guanine dinucleotide (Mo-MGD) cofactor. The chain is Probable molybdenum cofactor guanylyltransferase from Carboxydothermus hydrogenoformans (strain ATCC BAA-161 / DSM 6008 / Z-2901).